Here is a 212-residue protein sequence, read N- to C-terminus: Adapter protein MecA 2 (212 aa).

Belongs to the MecA family. As to quaternary structure, homodimer.

In terms of biological role, enables the recognition and targeting of unfolded and aggregated proteins to the ClpC protease or to other proteins involved in proteolysis. Acts negatively in the development of competence by binding ComK and recruiting it to the ClpCP protease. When overexpressed, inhibits sporulation. Also involved in Spx degradation by ClpC. This is Adapter protein MecA 2 (mecA2) from Halalkalibacterium halodurans (strain ATCC BAA-125 / DSM 18197 / FERM 7344 / JCM 9153 / C-125) (Bacillus halodurans).